A 187-amino-acid chain; its full sequence is MLNLDFTHKTTQATPRLHAVATEFLRVSNDVAELHKLSSKLTSDPYLFVEFVKTIRGFLSVQTALGLSGEIDTVFLQVIKGWFPDLITETFSFLIVVRIINLFNKRANSKVYPDILRRIGNNALYLTRNPLRGICLVEKAINVRDPDCTVFIALKLHSHYVELSFEELGSNIVEKLLSVGESGICGV.

The stretch at 20-42 (VATEFLRVSNDVAELHKLSSKLT) is one Pumilio 1; degenerate repeat. The Pumilio 2; degenerate repeat unit spans residues 43–78 (SDPYLFVEFVKTIRGFLSVQTALGLSGEIDTVFLQV). The stretch at 79-116 (IKGWFPDLITETFSFLIVVRIINLFNKRANSKVYPDIL) is one Pumilio 3; degenerate repeat. A Pumilio 4; degenerate repeat occupies 117 to 154 (RRIGNNALYLTRNPLRGICLVEKAINVRDPDCTVFIAL). Residues 155-187 (KLHSHYVELSFEELGSNIVEKLLSVGESGICGV) form a Pumilio 5 repeat.

Its subcellular location is the cytoplasm. Its function is as follows. Sequence-specific RNA-binding protein that regulates translation and mRNA stability by binding the 3'-UTR of target mRNAs. In Arabidopsis thaliana (Mouse-ear cress), this protein is Pumilio homolog 26 (APUM26).